Consider the following 625-residue polypeptide: Grainyhead-like protein 2 homolog (625 aa).

The interval 1–93 (MSQESDNNKR…KASDSQEDQD (93 aa)) is transcription activation. Disordered regions lie at residues 198–222 (ASHS…SFKD) and 428–452 (EERK…SSDG). One can recognise a Grh/CP2 DB domain in the interval 244 to 482 (GSGTFQYTLE…DLHSQPVLFI (239 aa)). Over residues 440-451 (QASQAQCNNSSD) the composition is skewed to polar residues.

Belongs to the grh/CP2 family. Grainyhead subfamily. In terms of assembly, homodimer, also forms heterodimers with GRHL1 or GRHL3.

It is found in the nucleus. The protein localises to the membrane. In terms of biological role, transcription factor playing an important role in primary neurulation and in epithelial development. Binds directly to the consensus DNA sequence 5'-AACCGGTT-3' acting as an activator and repressor on distinct target genes. During embryogenesis, plays unique and cooperative roles with GRHL3 in establishing distinct zones of primary neurulation. Essential for closure 3 (rostral end of the forebrain), functions cooperatively with GRHL3 in closure 2 (forebrain/midbrain boundary) and posterior neuropore closure. Regulates epithelial morphogenesis acting as a target gene-associated transcriptional activator of apical junctional complex components. Up-regulates of CLDN3 and CLDN4, as well as of RAB25, which increases the CLDN4 protein and its localization at tight junctions. Comprises an essential component of the transcriptional machinery that establishes appropriate expression levels of CLDN4 and CDH1 in different types of epithelia. Exhibits functional redundancy with GRHL3 in epidermal morphogenetic events such as eyelid fusion and epidermal wound repair. In lung, forms a regulatory loop with NKX2-1 that coordinates lung epithelial cell morphogenesis and differentiation. In keratinocytes, plays a role in telomerase activation during cellular proliferation, regulates TERT expression by binding to TERT promoter region and inhibiting DNA methylation at the 5'-CpG island, possibly by interfering with DNMT1 enzyme activity. In addition, impairs keratinocyte differentiation and epidermal function by inhibiting the expression of genes clustered at the epidermal differentiation complex (EDC) as well as GRHL1 and GRHL3 through epigenetic mechanisms. The sequence is that of Grainyhead-like protein 2 homolog (Grhl2) from Mus musculus (Mouse).